The chain runs to 503 residues: Maturase K (503 aa).

Belongs to the intron maturase 2 family. MatK subfamily.

Its subcellular location is the plastid. The protein localises to the chloroplast. Functionally, usually encoded in the trnK tRNA gene intron. Probably assists in splicing its own and other chloroplast group II introns. The chain is Maturase K from Vicia villosa (Hairy vetch).